The chain runs to 314 residues: Acetyl-coenzyme A carboxylase carboxyl transferase subunit alpha (314 aa).

Residues 32–289 form the CoA carboxyltransferase C-terminal domain; that stretch reads EIDMLEASLE…KSAFVEQLDS (258 aa).

The protein belongs to the AccA family. As to quaternary structure, acetyl-CoA carboxylase is a heterohexamer composed of biotin carboxyl carrier protein (AccB), biotin carboxylase (AccC) and two subunits each of ACCase subunit alpha (AccA) and ACCase subunit beta (AccD).

The protein localises to the cytoplasm. It carries out the reaction N(6)-carboxybiotinyl-L-lysyl-[protein] + acetyl-CoA = N(6)-biotinyl-L-lysyl-[protein] + malonyl-CoA. It functions in the pathway lipid metabolism; malonyl-CoA biosynthesis; malonyl-CoA from acetyl-CoA: step 1/1. Component of the acetyl coenzyme A carboxylase (ACC) complex. First, biotin carboxylase catalyzes the carboxylation of biotin on its carrier protein (BCCP) and then the CO(2) group is transferred by the carboxyltransferase to acetyl-CoA to form malonyl-CoA. This is Acetyl-coenzyme A carboxylase carboxyl transferase subunit alpha from Staphylococcus aureus (strain bovine RF122 / ET3-1).